The sequence spans 410 residues: MNDDKKDFVGRDLYQLIRNAKDKIKIDYKFWYTQPVPKINDEFDENVNEPFISDNKVEDVRKEEYKLPSGYAWCVCDITKENDRSDIYNLLTDNYVEDDDNVFRFNYSSEFLLWALSSPNYVKNWHIGVKYESTNKLVGFISAIPIDMCVNKNIIKMAEVNFLCVHKSLRSKRLAPVLIKEITRRINLESIWQAIYTAGVYLPKPISTARYFHRSINVKKLIEIGFSCLNTRLTMSRAIKLYRIDDTLNIKNLRLMKKKDIDGLQKLLNEHLKQYNLHAIFSKEDVAHWFTPIDQVIYTYVNEENGEIKDLISFYSLPSKVLGNNKYNILNAAFSFYNITTTTTFKNLIQDAICLAKRNNFDVFNALEVMDNYSVFQDLKFGEGDGSLKYYLYNWKCASCHPSKIGIVLL.

Residues phenylalanine 30, tryptophan 31, phenylalanine 162, leucine 163, cysteine 164, valine 165, serine 171, arginine 173, leucine 174, and alanine 175 each contribute to the tetradecanoyl-CoA site.

Belongs to the NMT family. As to quaternary structure, heterodimer composed of NMT and AK2; AK2 myristoylation stabilizes the complex.

It localises to the cytoplasm. The catalysed reaction is N-terminal glycyl-[protein] + tetradecanoyl-CoA = N-tetradecanoylglycyl-[protein] + CoA + H(+). Adds a myristoyl group to the N-terminal glycine residue of certain cellular proteins. Myristoylates adenylate kinase AK2. During the asexual blood stage, may myristoylate proteins such as ARO, CDPK1 and GAP45. Probably by mediating protein myristoylation, plays a role in the assembly of the inner membrane complex during the early stages of schizogony and in the formation of rhoptries in the late stages and thus merozoite egress. The sequence is that of Glycylpeptide N-tetradecanoyltransferase from Plasmodium falciparum (isolate 3D7).